The primary structure comprises 168 residues: Alkyl hydroperoxide reductase C (168 aa).

The Thioredoxin domain occupies 1–138; that stretch reads EFIEVSEESF…LVNKIKAAQY (138 aa). Cys-28 (cysteine sulfenic acid (-SOH) intermediate) is an active-site residue.

It belongs to the peroxiredoxin family. AhpC/Prx1 subfamily. Homodimer; disulfide-linked, upon oxidation. 5 homodimers assemble to form a ring-like decamer.

It is found in the cytoplasm. It catalyses the reaction a hydroperoxide + NADH + H(+) = an alcohol + NAD(+) + H2O. Thiol-specific peroxidase that catalyzes the reduction of hydrogen peroxide and organic hydroperoxides to water and alcohols, respectively. Plays a role in cell protection against oxidative stress by detoxifying peroxides. In Ferdinandcohnia aciditolerans (strain JCM 32973 / CCTCC AB 2017280 / YN-1) (Bacillus aciditolerans), this protein is Alkyl hydroperoxide reductase C.